The chain runs to 154 residues: Small ribosomal subunit protein uS19 (154 aa).

Belongs to the universal ribosomal protein uS19 family.

The protein is Small ribosomal subunit protein uS19 (RPS15) of Oryza sativa subsp. japonica (Rice).